The primary structure comprises 302 residues: Sulfate adenylyltransferase subunit 2 (302 aa).

The disordered stretch occupies residues 280 to 302 (RQGRAIDHDQSGSMELKKRQGYF).

This sequence belongs to the PAPS reductase family. CysD subfamily. Heterodimer composed of CysD, the smaller subunit, and CysN.

The enzyme catalyses sulfate + ATP + H(+) = adenosine 5'-phosphosulfate + diphosphate. It functions in the pathway sulfur metabolism; hydrogen sulfide biosynthesis; sulfite from sulfate: step 1/3. Its function is as follows. With CysN forms the ATP sulfurylase (ATPS) that catalyzes the adenylation of sulfate producing adenosine 5'-phosphosulfate (APS) and diphosphate, the first enzymatic step in sulfur assimilation pathway. APS synthesis involves the formation of a high-energy phosphoric-sulfuric acid anhydride bond driven by GTP hydrolysis by CysN coupled to ATP hydrolysis by CysD. This Vibrio vulnificus (strain CMCP6) protein is Sulfate adenylyltransferase subunit 2.